We begin with the raw amino-acid sequence, 455 residues long: tRNA modification GTPase MnmE (455 aa).

(6S)-5-formyl-5,6,7,8-tetrahydrofolate is bound by residues arginine 22, glutamate 85, and arginine 124. Residues 220–377 (GIYTVIVGRP…VEKAIKEAIL (158 aa)) enclose the TrmE-type G domain. Asparagine 230 provides a ligand contact to K(+). GTP-binding positions include 230-235 (NVGKSS), 249-255 (TDIPGTT), and 274-277 (DTAG). Serine 234 serves as a coordination point for Mg(2+). Threonine 249, isoleucine 251, and threonine 254 together coordinate K(+). Threonine 255 serves as a coordination point for Mg(2+). (6S)-5-formyl-5,6,7,8-tetrahydrofolate is bound at residue lysine 455.

This sequence belongs to the TRAFAC class TrmE-Era-EngA-EngB-Septin-like GTPase superfamily. TrmE GTPase family. As to quaternary structure, homodimer. Heterotetramer of two MnmE and two MnmG subunits. Requires K(+) as cofactor.

The protein resides in the cytoplasm. Exhibits a very high intrinsic GTPase hydrolysis rate. Involved in the addition of a carboxymethylaminomethyl (cmnm) group at the wobble position (U34) of certain tRNAs, forming tRNA-cmnm(5)s(2)U34. This Caldicellulosiruptor saccharolyticus (strain ATCC 43494 / DSM 8903 / Tp8T 6331) protein is tRNA modification GTPase MnmE.